A 189-amino-acid chain; its full sequence is Selenoprotein S (189 aa).

Residues 29–49 form a helical membrane-spanning segment; sequence VVLSSYGWYILLGCILIYLLI. Positions 114–125 are enriched in basic and acidic residues; that stretch reads IETWDRMKEGKS. The tract at residues 114-189 is disordered; sequence IETWDRMKEG…RRGPSSGGUG (76 aa). Over residues 136 to 147 the composition is skewed to low complexity; that stretch reads PSPSTSTSAATK. Over residues 148–157 the composition is skewed to basic and acidic residues; it reads PKQEKQERKT. Position 188 (U188) is a non-standard amino acid, selenocysteine.

The protein belongs to the selenoprotein S family.

The protein resides in the endoplasmic reticulum membrane. The protein localises to the cytoplasm. Involved in the degradation process of misfolded endoplasmic reticulum (ER) luminal proteins. Participates in the transfer of misfolded proteins from the ER to the cytosol, where they are destroyed by the proteasome in a ubiquitin-dependent manner. The protein is Selenoprotein S (vimp) of Xenopus tropicalis (Western clawed frog).